We begin with the raw amino-acid sequence, 243 residues long: Phosphoribosylaminoimidazole-succinocarboxamide synthase (243 aa).

Belongs to the SAICAR synthetase family.

It carries out the reaction 5-amino-1-(5-phospho-D-ribosyl)imidazole-4-carboxylate + L-aspartate + ATP = (2S)-2-[5-amino-1-(5-phospho-beta-D-ribosyl)imidazole-4-carboxamido]succinate + ADP + phosphate + 2 H(+). It participates in purine metabolism; IMP biosynthesis via de novo pathway; 5-amino-1-(5-phospho-D-ribosyl)imidazole-4-carboxamide from 5-amino-1-(5-phospho-D-ribosyl)imidazole-4-carboxylate: step 1/2. The protein is Phosphoribosylaminoimidazole-succinocarboxamide synthase of Prochlorococcus marinus (strain MIT 9211).